A 199-amino-acid chain; its full sequence is Superoxide dismutase [Mn/Fe] 1 (199 aa).

Fe(3+) is bound by residues His-27, His-81, Asp-161, and His-165. The Mn(2+) site is built by His-27, His-81, Asp-161, and His-165.

Belongs to the iron/manganese superoxide dismutase family. As to quaternary structure, homodimer. Can also form a heterodimer with SodM. The cofactor is Mn(2+). Fe(3+) is required as a cofactor.

The enzyme catalyses 2 superoxide + 2 H(+) = H2O2 + O2. In terms of biological role, destroys superoxide anion radicals which are normally produced within the cells and which are toxic to biological systems. Catalyzes the dismutation of superoxide anion radicals into O2 and H2O2 by successive reduction and oxidation of the transition metal ion at the active site. In Staphylococcus aureus (strain USA300), this protein is Superoxide dismutase [Mn/Fe] 1 (sodA).